The sequence spans 1347 residues: Spermatogenesis-associated protein 31A5 (1347 aa).

A helical membrane pass occupies residues 23-43 (PWVLDIFLTLVFALGFFFLLL). 7 disordered regions span residues 55-87 (PSPSPGKRKCPVGRRRRPRGRMKNHSLRAGREC), 106-233 (GPHL…RDST), 373-397 (EQDTTNPKPFWNMGENSKQLPGPQK), 628-657 (DESPGTSQAKGKPSPWQSSMSTGEGSKEAQ), 900-955 (RGIP…REAV), 1084-1161 (VHEE…PSVS), and 1313-1335 (KAVSPVSPPQHWPKTSGASSHHH). Residues 60–82 (GKRKCPVGRRRRPRGRMKNHSLR) are compositionally biased toward basic residues. Polar residues predominate over residues 165–178 (LASTPSPGPMTTSV). Over residues 198–211 (PEPPALFPHPPHTP) the composition is skewed to pro residues. Composition is skewed to polar residues over residues 631–651 (PGTSQAKGKPSPWQSSMSTGE) and 927–948 (LTYSLTGSIQQSRSLGAQSSKA). Composition is skewed to basic and acidic residues over residues 1108–1127 (HKSEKSRKPNLEKHEERLEG) and 1137–1146 (RKTEDTHQDE).

This sequence belongs to the SPATA31 family.

Its subcellular location is the membrane. Its function is as follows. May play a role in spermatogenesis. This chain is Spermatogenesis-associated protein 31A5 (SPATA31A5), found in Homo sapiens (Human).